An 861-amino-acid polypeptide reads, in one-letter code: 1,4-alpha-glucan-branching enzyme (861 aa).

(1,4-alpha-D-glucosyl)n contacts are provided by Trp173 and Lys208. Asp429 acts as the Nucleophile in catalysis. The active-site Proton donor is Glu484.

This sequence belongs to the glycosyl hydrolase 13 family. GlgB subfamily. In terms of assembly, monomer.

The protein resides in the plastid. It is found in the chloroplast. The protein localises to the amyloplast. The catalysed reaction is Transfers a segment of a (1-&gt;4)-alpha-D-glucan chain to a primary hydroxy group in a similar glucan chain.. Its pathway is glycan biosynthesis; starch biosynthesis. In terms of biological role, catalyzes the formation of the alpha-1,6-glucosidic linkages in starch by scission of a 1,4-alpha-linked oligosaccharide from growing alpha-1,4-glucan chains and the subsequent attachment of the oligosaccharide to the alpha-1,6 position. The polypeptide is 1,4-alpha-glucan-branching enzyme (SBE1) (Solanum tuberosum (Potato)).